Consider the following 445-residue polypeptide: Neuropeptide Y receptor type 5 (445 aa).

The Extracellular portion of the chain corresponds to 1-42 (MDLELDEYYNKTLATENNTAATRNSDFPVWDDYKSSVDDLQY). Residues asparagine 10 and asparagine 17 are each glycosylated (N-linked (GlcNAc...) asparagine). The chain crosses the membrane as a helical span at residues 43–63 (FLIGLYTFVSLLGFMGNLLIL). Residues 64–77 (MALMKKRNQKTTVN) are Cytoplasmic-facing. The chain crosses the membrane as a helical span at residues 78–98 (FLIGNLAFSDILVVLFCSPFT). At 99-117 (LTSVLLDQWMFGKVMCHIM) the chain is on the extracellular side. Cysteine 114 and cysteine 198 form a disulfide bridge. A helical transmembrane segment spans residues 118–138 (PFLQCVSVLVSTLILISIAIV). Residues 139 to 156 (RYHMIKHPISNNLTANHG) are Cytoplasmic-facing. A helical membrane pass occupies residues 157-177 (YFLIATVWTLGFAICSPLPVF). The Extracellular segment spans residues 178 to 208 (HSLVELQETFGSALLSSRYLCVESWPSDSYR). The chain crosses the membrane as a helical span at residues 209 to 229 (IAFTISLLLVQYILPLVCLTV). Residues 230 to 369 (SHTSVCRSIS…KKRSRSVFYR (140 aa)) are Cytoplasmic-facing. The helical transmembrane segment at 370 to 390 (LTILILVFAVSWMPLHLFHVV) threads the bilayer. The Extracellular segment spans residues 391-407 (TDFNDNLISNRHFKLVY). Residues 408 to 428 (CICHLLGMMSCCLNPILYGFL) traverse the membrane as a helical segment. Topologically, residues 429–445 (NNGIKADLVSLIHCLHM) are cytoplasmic. Cysteine 442 is lipidated: S-palmitoyl cysteine.

Belongs to the G-protein coupled receptor 1 family. As to expression, brain; hypothalamus.

The protein localises to the cell membrane. Its function is as follows. Receptor for neuropeptide Y and peptide YY. The activity of this receptor is mediated by G proteins that inhibit adenylate cyclase activity. Seems to be associated with food intake. Could be involved in feeding disorders. This Homo sapiens (Human) protein is Neuropeptide Y receptor type 5 (NPY5R).